The chain runs to 414 residues: MPTWTEYIFQKKLGHTPSPGDVVEVVPDLVGFHDLTGYHVLEVLESMGKVEVFDKERVVVAFDHLSPPPTQRAAEIMVYIRKHVKALELPHFYDVGGGILHQIILEKYAMPEYVIFAADSHTNTAGAVGAFAHGMGATDIAAALKLGKTWVVIPAPFRVDMKGEFPPGVMGKDVALHLLKQFGAEGFNGYSVEVFVEIPKAFPMDDRATVANMSTEMGADALMFIPDVVTVDYLQRERGVSYKPPDLQPGRYVDKYVVELSKLEPLVAAPYSVDNVKAVREVEGVEVDQVFIGSCTNGRLSDFEIAARILRRGRVKSRCIAIPASYTIFRKALELGYIDILTKAGCVVTYGTCGPCLGGHFGVAGPGEVVVSTSNRNFKGRMGHPDSKVYLANPATAAAAALEGKIVDPRPYLL.

[4Fe-4S] cluster contacts are provided by C295, C353, and C356.

It belongs to the aconitase/IPM isomerase family. LeuC type 2 subfamily. Heterodimer of LeuC and LeuD. Requires [4Fe-4S] cluster as cofactor.

The enzyme catalyses (2R,3S)-3-isopropylmalate = (2S)-2-isopropylmalate. It participates in amino-acid biosynthesis; L-leucine biosynthesis; L-leucine from 3-methyl-2-oxobutanoate: step 2/4. Catalyzes the isomerization between 2-isopropylmalate and 3-isopropylmalate, via the formation of 2-isopropylmaleate. The protein is 3-isopropylmalate dehydratase large subunit of Pyrobaculum islandicum (strain DSM 4184 / JCM 9189 / GEO3).